The primary structure comprises 181 residues: Glutamyl-tRNA(Gln) amidotransferase subunit C, chloroplastic/mitochondrial (181 aa).

This sequence belongs to the GatC family. In terms of assembly, subunit of the heterotrimeric GatCAB amidotransferase (AdT) complex, composed of A, B and C subunits.

The protein localises to the mitochondrion. Its subcellular location is the plastid. It is found in the chloroplast. It carries out the reaction L-glutamyl-tRNA(Gln) + L-glutamine + ATP + H2O = L-glutaminyl-tRNA(Gln) + L-glutamate + ADP + phosphate + H(+). Functionally, allows the formation of correctly charged Gln-tRNA(Gln) through the transamidation of misacylated Glu-tRNA(Gln) in chloroplasts and mitochondria. The reaction takes place in the presence of glutamine and ATP through an activated gamma-phospho-Glu-tRNA(Gln). This Picea sitchensis (Sitka spruce) protein is Glutamyl-tRNA(Gln) amidotransferase subunit C, chloroplastic/mitochondrial.